The sequence spans 747 residues: Anoctamin-9 (747 aa).

The Cytoplasmic segment spans residues 1 to 193; the sequence is MQDDESSQIF…LYFTWLGWYT (193 aa). A helical transmembrane segment spans residues 194–214; that stretch reads YMLVPAAVVGLIVFLSGFALF. Residues 215–259 are Extracellular-facing; the sequence is DSSQISKEICSANDIFMCPLGDHSHRYLRLSEMCTFAKLTHLFDN. The residue at position 245 (S245) is a Phosphoserine; by PKA. The chain crosses the membrane as a helical span at residues 260–280; it reads EGTVLFAIFMALWATVFLEIW. Residues 281–326 are Cytoplasmic-facing; it reads KRKRAHEVQSWKLYEWDEEEEEMALELINSPHYKLKDHRHSYLSST. A helical transmembrane segment spans residues 327 to 347; sequence IILILSLFMICLMIGMAHVLV. At 348-364 the chain is on the extracellular side; that stretch reads VYRVLAGALFSSLVKQQ. Residues 365–385 form a helical membrane-spanning segment; sequence VTTAVVVTGAVVHYIIIVIMT. Residues 386–414 lie on the Cytoplasmic side of the membrane; that stretch reads KVNKYVALKLCKFEESGTFSEQERKFTVK. A helical transmembrane segment spans residues 415–435; the sequence is FFILQFFAHFSSLIYIAFILG. The Extracellular segment spans residues 436–543; sequence RINGHPGKST…EMMIQYGFTT (108 aa). Residues 544–564 traverse the membrane as a helical segment; that stretch reads IFVAAFPLAPLLALFSNLVEI. Topologically, residues 565–595 are cytoplasmic; the sequence is RLDAIKMVRLQRRLVPRKAKDIGTWLQVLET. The helical transmembrane segment at 596 to 616 threads the bilayer; it reads IGVLAVIANGMVIAFTSEFIP. The Extracellular segment spans residues 617-695; that stretch reads RVVYKYHYGP…FWFILAIRLT (79 aa). N630, N643, N665, and N681 each carry an N-linked (GlcNAc...) asparagine glycan. Residues 696–716 form a helical membrane-spanning segment; that stretch reads FVILFEHFALCIKLIAAWFVP. At 717–747 the chain is on the cytoplasmic side; that stretch reads DVPQKVKNEVLQEKYDRIRHRMRFSSRSTDV.

The protein belongs to the anoctamin family. Post-translationally, phosphorylation on Ser-245 by cAMP-dependent protein kinase A (PKA)is essential for activation of its cation channel activity. As to expression, highly expressed in the olfactory epithelium, particularly in mature olfactory sensory neurons (at protein level). Expressed in the kidney (at protein level). Predominant expression seen in epithelial tissues. Highly expressed in the small intestine, colon and stomach.

The protein localises to the cell membrane. The protein resides in the endoplasmic reticulum. The catalysed reaction is a 1,2-diacyl-sn-glycero-3-phospho-L-serine(in) = a 1,2-diacyl-sn-glycero-3-phospho-L-serine(out). It carries out the reaction a beta-D-galactosyl-(1&lt;-&gt;1')-N-acylsphing-4-enine(out) = a beta-D-galactosyl-(1&lt;-&gt;1')-N-acylsphing-4-enine(in). The enzyme catalyses a 1,2-diacyl-sn-glycero-3-phosphocholine(in) = a 1,2-diacyl-sn-glycero-3-phosphocholine(out). It catalyses the reaction Ca(2+)(in) = Ca(2+)(out). The catalysed reaction is Na(+)(in) = Na(+)(out). It carries out the reaction K(+)(in) = K(+)(out). Its activity is regulated as follows. Cation channel activity is activated via phosphorylation on Ser-245 by cAMP-dependent protein kinase A (PKA). Inhibited by NaCl. Its function is as follows. PKA-activated nonselective cation channel. Discriminates poorly among cations but is more permeable to Ca(2+) ions than to monovalent cations. Acts as a calcium-activated calcium permeable channel which may operate as a endoplasmic reticulum (ER) Ca(2+)-leak channel, reducing the loading of the ER Ca(2+) store. Regulates intracellular Ca2+ signals, ion channel activity, and cytokine release in the renal tissue. Plays an important role in olfaction, amplifying cAMP-evoked cyclic nucleotide-gated (CNG) channel currents in the olfactory sensory neurons. Has calcium-dependent phospholipid scramblase activity; scrambles phosphatidylserine, phosphatidylcholine and galactosylceramide. Does not exhibit calcium-activated chloride channel (CaCC) activity. Can inhibit the activity of ANO1. The sequence is that of Anoctamin-9 from Mus musculus (Mouse).